The chain runs to 156 residues: Histone acetyltransferase HPA2 (156 aa).

The N-acetyltransferase domain occupies 9–156 (ITVRFVTEND…PKILYKRKGY (148 aa)). 93-106 (LYVDENSRVKGAGG) contributes to the acetyl-CoA binding site.

It belongs to the acetyltransferase family. GNAT subfamily. In terms of assembly, forms homodimers in the absence, and homotetramers in the presence of acetyl-CoA. Post-translationally, autoacetylates in an intermolecular reaction.

It carries out the reaction L-lysyl-[protein] + acetyl-CoA = N(6)-acetyl-L-lysyl-[protein] + CoA + H(+). Functionally, N-acetyltransferase that acetylates histone H3 at 'Lys-14' and histone H4 at 'Lys-5' and 'Lys-12'. Also acetylates polyamines like putrescine, spermidine and spermine, and certain other small basic proteins like nuclear HMG proteins. This is Histone acetyltransferase HPA2 from Saccharomyces cerevisiae (strain ATCC 204508 / S288c) (Baker's yeast).